We begin with the raw amino-acid sequence, 42 residues long: Beta-2-microglobulin (42 aa).

An Ig-like C1-type domain is found at 5–42 (PKIQVYSRHPAZBGKPBFLBCYVSGFHPXZIZIBLLKB).

As to quaternary structure, heterodimer of an alpha chain and a beta chain. Beta-2-microglobulin is the beta-chain of major histocompatibility complex class I molecules.

The protein localises to the secreted. Functionally, component of the class I major histocompatibility complex (MHC). Involved in the presentation of peptide antigens to the immune system. In Canis lupus familiaris (Dog), this protein is Beta-2-microglobulin (B2M).